The following is a 132-amino-acid chain: Phosphoribosyl-AMP cyclohydrolase (132 aa).

A Mg(2+)-binding site is contributed by aspartate 89. Cysteine 90 is a Zn(2+) binding site. 2 residues coordinate Mg(2+): aspartate 91 and aspartate 93. 2 residues coordinate Zn(2+): cysteine 106 and cysteine 113.

It belongs to the PRA-CH family. As to quaternary structure, homodimer. Mg(2+) serves as cofactor. The cofactor is Zn(2+).

The protein resides in the cytoplasm. The enzyme catalyses 1-(5-phospho-beta-D-ribosyl)-5'-AMP + H2O = 1-(5-phospho-beta-D-ribosyl)-5-[(5-phospho-beta-D-ribosylamino)methylideneamino]imidazole-4-carboxamide. It participates in amino-acid biosynthesis; L-histidine biosynthesis; L-histidine from 5-phospho-alpha-D-ribose 1-diphosphate: step 3/9. Functionally, catalyzes the hydrolysis of the adenine ring of phosphoribosyl-AMP. In Renibacterium salmoninarum (strain ATCC 33209 / DSM 20767 / JCM 11484 / NBRC 15589 / NCIMB 2235), this protein is Phosphoribosyl-AMP cyclohydrolase.